Here is a 207-residue protein sequence, read N- to C-terminus: Urease accessory protein UreG (207 aa).

Position 16–23 (G16–T23) interacts with GTP.

Belongs to the SIMIBI class G3E GTPase family. UreG subfamily. Homodimer. UreD, UreF and UreG form a complex that acts as a GTP-hydrolysis-dependent molecular chaperone, activating the urease apoprotein by helping to assemble the nickel containing metallocenter of UreC. The UreE protein probably delivers the nickel.

The protein resides in the cytoplasm. Facilitates the functional incorporation of the urease nickel metallocenter. This process requires GTP hydrolysis, probably effectuated by UreG. In Blochmanniella pennsylvanica (strain BPEN), this protein is Urease accessory protein UreG.